Reading from the N-terminus, the 61-residue chain is Small ribosomal subunit protein uS14 (61 aa).

Residues C24, C27, C40, and C43 each contribute to the Zn(2+) site.

The protein belongs to the universal ribosomal protein uS14 family. Zinc-binding uS14 subfamily. As to quaternary structure, part of the 30S ribosomal subunit. Contacts proteins S3 and S10. Requires Zn(2+) as cofactor.

Functionally, binds 16S rRNA, required for the assembly of 30S particles and may also be responsible for determining the conformation of the 16S rRNA at the A site. This chain is Small ribosomal subunit protein uS14, found in Halalkalibacterium halodurans (strain ATCC BAA-125 / DSM 18197 / FERM 7344 / JCM 9153 / C-125) (Bacillus halodurans).